The sequence spans 723 residues: Catalase-peroxidase (723 aa).

The segment at residues 98–226 (WHAAGSYRAA…LAAVQMGLIY (129 aa)) is a cross-link (tryptophyl-tyrosyl-methioninium (Trp-Tyr) (with M-252)). His-99 acts as the Proton acceptor in catalysis. The segment at residues 226 to 252 (YVNPEGVNGKPDPLKTAAQVRETFARM) is a cross-link (tryptophyl-tyrosyl-methioninium (Tyr-Met) (with W-98)). His-267 serves as a coordination point for heme b. A disordered region spans residues 267–286 (HTVGKTHGNGRAENLGPSPE).

Belongs to the peroxidase family. Peroxidase/catalase subfamily. As to quaternary structure, homodimer or homotetramer. The cofactor is heme b. In terms of processing, formation of the three residue Trp-Tyr-Met cross-link is important for the catalase, but not the peroxidase activity of the enzyme.

It catalyses the reaction H2O2 + AH2 = A + 2 H2O. The catalysed reaction is 2 H2O2 = O2 + 2 H2O. In terms of biological role, bifunctional enzyme with both catalase and broad-spectrum peroxidase activity. This chain is Catalase-peroxidase, found in Thioalkalivibrio sulfidiphilus (strain HL-EbGR7).